Reading from the N-terminus, the 226-residue chain is Thaumatin-like protein (226 aa).

The signal sequence occupies residues 1 to 24; the sequence is MNFSKNLPLLVSLWAITFFAYTHA. Cystine bridges form between cysteine 33–cysteine 225, cysteine 74–cysteine 84, cysteine 89–cysteine 95, cysteine 140–cysteine 214, cysteine 145–cysteine 197, cysteine 153–cysteine 163, cysteine 167–cysteine 176, and cysteine 177–cysteine 184.

It belongs to the thaumatin family. As to expression, expressed in fruits.

The protein resides in the secreted. Its function is as follows. 3D-structure modeling suggests it may have endo-(1,3)-beta-glucanase activity. This is Thaumatin-like protein from Olea europaea (Common olive).